A 369-amino-acid chain; its full sequence is MLYYLLQYINELFDPPGFGVIEYITFRASAAAITSLLITILAGPKLIGYLKSKYIEPVKEEAPPEHRQKRKELPTMGGTLIIFSVVVSGLLWAKFNDPYVWLILLSILWMGTIGFIDDYRKVVLKIKGGLSAKYKLIGQVSLGLFIGFYTRFDPAFSVLLTETTIPFFKDLMIDYGWWYIPVVVFIITAVSNAVNLTDGLDGLAAGTSGIVVFGLGGFAYLTGNAVYSEYLNIAFIPGGGEVAVVSMAIVMACVGFLWFNSHPAEIFMGDTGSLALGSAIAVIALLIKKELLLPVLAGTFLLETLSVSLQVTWFKFTKWRFGEGRRIFLMAPLHHHYQMKGWAEEKIVIRFWIITLLFFLASLMTLKLR.

A run of 10 helical transmembrane segments spans residues 30 to 50, 73 to 93, 99 to 119, 140 to 160, 171 to 191, 202 to 222, 239 to 259, 266 to 286, 291 to 311, and 346 to 366; these read AAAI…IGYL, LPTM…LLWA, YVWL…IDDY, VSLG…SVLL, LMID…TAVS, GLAA…AYLT, GGEV…FLWF, IFMG…IALL, LLLP…SLQV, and KIVI…LMTL.

It belongs to the glycosyltransferase 4 family. MraY subfamily. It depends on Mg(2+) as a cofactor.

Its subcellular location is the cell inner membrane. It catalyses the reaction UDP-N-acetyl-alpha-D-muramoyl-L-alanyl-gamma-D-glutamyl-meso-2,6-diaminopimeloyl-D-alanyl-D-alanine + di-trans,octa-cis-undecaprenyl phosphate = di-trans,octa-cis-undecaprenyl diphospho-N-acetyl-alpha-D-muramoyl-L-alanyl-D-glutamyl-meso-2,6-diaminopimeloyl-D-alanyl-D-alanine + UMP. It functions in the pathway cell wall biogenesis; peptidoglycan biosynthesis. In terms of biological role, catalyzes the initial step of the lipid cycle reactions in the biosynthesis of the cell wall peptidoglycan: transfers peptidoglycan precursor phospho-MurNAc-pentapeptide from UDP-MurNAc-pentapeptide onto the lipid carrier undecaprenyl phosphate, yielding undecaprenyl-pyrophosphoryl-MurNAc-pentapeptide, known as lipid I. The chain is Phospho-N-acetylmuramoyl-pentapeptide-transferase from Chlorobium phaeobacteroides (strain BS1).